The sequence spans 541 residues: Membrane protein insertase YidC (541 aa).

A helical transmembrane segment spans residues 6 to 26; that stretch reads SLLVLALIFISFLVYQQWQLD. The tract at residues 34–56 is disordered; it reads EQTTSITATSDVPASSPSNSQAI. Transmembrane regions (helical) follow at residues 337–357, 416–436, 454–474, and 495–515; these read FWLLTFIQGIVSNWGLAIICV, LGGCLPILLQMPIFIALYWTF, LSAQDPYYILPILMGISMFLL, and PLIFMVFFLWFPSGLVLYWLV.

It belongs to the OXA1/ALB3/YidC family. Type 1 subfamily. Interacts with the Sec translocase complex via SecD. Specifically interacts with transmembrane segments of nascent integral membrane proteins during membrane integration.

Its subcellular location is the cell inner membrane. Functionally, required for the insertion and/or proper folding and/or complex formation of integral membrane proteins into the membrane. Involved in integration of membrane proteins that insert both dependently and independently of the Sec translocase complex, as well as at least some lipoproteins. Aids folding of multispanning membrane proteins. The polypeptide is Membrane protein insertase YidC (Haemophilus influenzae (strain PittEE)).